A 147-amino-acid polypeptide reads, in one-letter code: DNA-directed RNA polymerase I subunit rpa14 (147 aa).

A disordered region spans residues V71–S147. Residues P74–E84 show a composition bias toward low complexity. Over residues L87–T111 the composition is skewed to basic and acidic residues. Positions K112 to R124 are enriched in basic residues. Residues R125–A135 show a composition bias toward basic and acidic residues.

Component of the RNA polymerase I (Pol I) complex consisting of 14 subunits. Part of a Pol I subcomplex consisting of the subunits A14 and A43. Interacts with rpa43. In terms of processing, phosphorylated.

Its subcellular location is the nucleus. The protein localises to the nucleolus. Its function is as follows. DNA-dependent RNA polymerase catalyzes the transcription of DNA into RNA using the four ribonucleoside triphosphates as substrates. Component of RNA polymerase I which synthesizes ribosomal RNA precursors. A14 seems to play a role in the stability of Pol I subunit A43 and association of rrn3 to Pol I. This Schizosaccharomyces pombe (strain 972 / ATCC 24843) (Fission yeast) protein is DNA-directed RNA polymerase I subunit rpa14 (ker1).